Here is a 60-residue protein sequence, read N- to C-terminus: uncharacterized protein (60 aa).

A helical membrane pass occupies residues 38-58; the sequence is SILAGGIIPVLFFFPLFLFLY.

It is found in the membrane. This is an uncharacterized protein from Saccharomyces cerevisiae (strain ATCC 204508 / S288c) (Baker's yeast).